A 605-amino-acid chain; its full sequence is MADSKGSTSKEGFGDWCILEADCSDVEDDLGQLFERDTDSDISDLLDNCDLDQGNSRELFHQQECKQSEEQLQKLKRKYLSPKAVAQLSPRLESISLSPQQKSKRRLFAEQDSGLELTFNNEAEDVTPEVEVPAIDSRPDDDEGGSGDVDIHYTALLRSSNQKATLLAKFKQAFGVGFNELTRQFKSYKTCCNHWVVSVYAVHDDLFESSKQLLQQHCDYIWVRGIDAMSLYLLCFKAGKNRGTVHKLITTMLNVHEQQILSEPPKLRNTAAALFWYKGCMGPGVFTHGPYPEWIAQLTILGHKSAEASAFDLSVMVQWAFDNNLFEEADIAYGYARLAPEDSNAVAWLAHNNQAKYVRECAMMVRYYKKGQMRDMSMSEWIYTRIHEVEGEGQWSSIVKFLRYQEINFISFLAALKDLLHSVPKRNCILFHGPPNTGKSSFGMSLIKVLRGRVLSFVNSKSQFWLQPLGECKIALLDDVTDPCWVYMDQYLRNGLDGHFVSLDCKYRAPMQTKFPPLILTSNINVHAETNYRYLHSRIKGFEFKNPFPMKADNTPQFELTDQSWKSFFTRLWTHLDLSDQEDEGEHGESQRAFQCSARTANEHL.

The Nuclear localization signal motif lies at 76-78 (KRK). Phosphoserine; by host occurs at positions 81 and 89. Residues 88-97 (LSPRLESISL) carry the Nuclear export signal motif. The DNA-binding region stretch occupies residues 145–308 (GSGDVDIHYT…TILGHKSAEA (164 aa)). Residues 407–557 (INFISFLAAL…FPMKADNTPQ (151 aa)) form the SF3 helicase domain. 433–440 (GPPNTGKS) is a binding site for ATP. A Glycyl lysine isopeptide (Lys-Gly) (interchain with G-Cter in SUMO) cross-link involves residue K514.

The protein belongs to the papillomaviridae E1 protein family. Can form hexamers. Interacts with E2 protein; this interaction increases E1 DNA binding specificity. Interacts with host DNA polymerase subunit POLA2. Interacts with host single stranded DNA-binding protein RPA1. Interacts with host TOP1; this interaction stimulates the enzymatic activity of TOP1. Post-translationally, phosphorylated. Sumoylated.

The protein resides in the host nucleus. It catalyses the reaction Couples ATP hydrolysis with the unwinding of duplex DNA by translocating in the 3'-5' direction.. It carries out the reaction ATP + H2O = ADP + phosphate + H(+). In terms of biological role, ATP-dependent DNA 3'-5' helicase required for initiation of viral DNA replication. It forms a complex with the viral E2 protein. The E1-E2 complex binds to the replication origin which contains binding sites for both proteins. During the initial step, a dimer of E1 interacts with a dimer of protein E2 leading to a complex that binds the viral origin of replication with high specificity. Then, a second dimer of E1 displaces the E2 dimer in an ATP-dependent manner to form the E1 tetramer. Following this, two E1 monomers are added to each half of the site, which results in the formation of two E1 trimers on the viral ori. Subsequently, two hexamers will be created. The double hexamer acts as a bi-directional helicase machinery and unwinds the viral DNA and then recruits the host DNA polymerase to start replication. This Human papillomavirus 47 protein is Replication protein E1.